Here is a 239-residue protein sequence, read N- to C-terminus: Phosphoribosylaminoimidazole-succinocarboxamide synthase (239 aa).

It belongs to the SAICAR synthetase family.

It catalyses the reaction 5-amino-1-(5-phospho-D-ribosyl)imidazole-4-carboxylate + L-aspartate + ATP = (2S)-2-[5-amino-1-(5-phospho-beta-D-ribosyl)imidazole-4-carboxamido]succinate + ADP + phosphate + 2 H(+). The protein operates within purine metabolism; IMP biosynthesis via de novo pathway; 5-amino-1-(5-phospho-D-ribosyl)imidazole-4-carboxamide from 5-amino-1-(5-phospho-D-ribosyl)imidazole-4-carboxylate: step 1/2. The sequence is that of Phosphoribosylaminoimidazole-succinocarboxamide synthase from Campylobacter hominis (strain ATCC BAA-381 / DSM 21671 / CCUG 45161 / LMG 19568 / NCTC 13146 / CH001A).